The sequence spans 117 residues: Ig heavy chain V region G4 (117 aa).

Positions Met1–Ser19 are cleaved as a signal peptide. Residues Glu20–Ser49 form a framework-1 region. A disulfide bond links Cys41 and Cys115. The complementarity-determining-1 stretch occupies residues Asp50–Ala54. The tract at residues Trp55–Gly68 is framework-2. A complementarity-determining-2 region spans residues Glu69–Gly85. The framework-3 stretch occupies residues Arg86–Arg117.

The chain is Ig heavy chain V region G4 (G4) from Caiman crocodilus (Spectacled caiman).